Consider the following 142-residue polypeptide: Putative pre-16S rRNA nuclease (142 aa).

This sequence belongs to the YqgF nuclease family.

The protein localises to the cytoplasm. Its function is as follows. Could be a nuclease involved in processing of the 5'-end of pre-16S rRNA. The sequence is that of Putative pre-16S rRNA nuclease from Lactobacillus delbrueckii subsp. bulgaricus (strain ATCC 11842 / DSM 20081 / BCRC 10696 / JCM 1002 / NBRC 13953 / NCIMB 11778 / NCTC 12712 / WDCM 00102 / Lb 14).